We begin with the raw amino-acid sequence, 312 residues long: Probable phytanoyl-CoA dioxygenase (312 aa).

Residues lysine 84, methionine 124, 142 to 144, and tryptophan 160 each bind 2-oxoglutarate; that span reads HQD. 2 residues coordinate Fe cation: histidine 142 and aspartate 144. Histidine 231 contacts Fe cation. Serine 233 and arginine 242 together coordinate 2-oxoglutarate.

This sequence belongs to the PhyH family. Fe cation serves as cofactor. It depends on L-ascorbate as a cofactor.

The catalysed reaction is phytanoyl-CoA + 2-oxoglutarate + O2 = 2-hydroxyphytanoyl-CoA + succinate + CO2. It functions in the pathway lipid metabolism; fatty acid metabolism. Its function is as follows. Converts phytanoyl-CoA to 2-hydroxyphytanoyl-CoA. The sequence is that of Probable phytanoyl-CoA dioxygenase from Caenorhabditis elegans.